A 151-amino-acid polypeptide reads, in one-letter code: UPF0756 membrane protein Hore_21770 (151 aa).

Helical transmembrane passes span 7–29, 49–69, 84–104, 110–130, and 131–151; these read LLIITILGFLARSRVLVIAGLLL, IEIGLIFLLMAILSSLVLSPV, TVAIIAGVLATKFNGMGLDLL, FILGIIMGSLVGIVFFGGIPV, and GPLMAAGIGAVLFKIIEIIKG.

It belongs to the UPF0756 family.

Its subcellular location is the cell membrane. In Halothermothrix orenii (strain H 168 / OCM 544 / DSM 9562), this protein is UPF0756 membrane protein Hore_21770.